A 126-amino-acid chain; its full sequence is Aspartate 1-decarboxylase (126 aa).

The Schiff-base intermediate with substrate; via pyruvic acid role is filled by Ser25. Ser25 bears the Pyruvic acid (Ser) mark. Thr57 contributes to the substrate binding site. Tyr58 functions as the Proton donor in the catalytic mechanism. Substrate is bound at residue 73 to 75 (GAA).

The protein belongs to the PanD family. As to quaternary structure, heterooctamer of four alpha and four beta subunits. It depends on pyruvate as a cofactor. Post-translationally, is synthesized initially as an inactive proenzyme, which is activated by self-cleavage at a specific serine bond to produce a beta-subunit with a hydroxyl group at its C-terminus and an alpha-subunit with a pyruvoyl group at its N-terminus.

The protein resides in the cytoplasm. The enzyme catalyses L-aspartate + H(+) = beta-alanine + CO2. Its pathway is cofactor biosynthesis; (R)-pantothenate biosynthesis; beta-alanine from L-aspartate: step 1/1. Functionally, catalyzes the pyruvoyl-dependent decarboxylation of aspartate to produce beta-alanine. The polypeptide is Aspartate 1-decarboxylase (Escherichia coli O6:H1 (strain CFT073 / ATCC 700928 / UPEC)).